Here is a 182-residue protein sequence, read N- to C-terminus: Putative manganese efflux pump MntP (182 aa).

The next 6 helical transmembrane spans lie at 6-26 (LIPL…VSLG), 37-57 (ILYI…IGMV), 71-91 (HFAG…SSIL), 101-121 (IGIS…SVGL), 131-151 (IITI…GLLI), and 162-182 (YGEI…LFPI).

The protein belongs to the MntP (TC 9.B.29) family.

The protein localises to the cell membrane. Its function is as follows. Probably functions as a manganese efflux pump. The chain is Putative manganese efflux pump MntP from Bacillus anthracis (strain A0248).